The sequence spans 97 residues: Venom peptide HsVx1 (97 aa).

A signal peptide spans 1–20 (MSHLRIAVTFLCTLFALTAG).

Belongs to the scorpion La1-like peptide family. In terms of processing, contains 4 disulfide bonds. As to expression, expressed by the venom gland.

It localises to the secreted. The polypeptide is Venom peptide HsVx1 (Heterometrus spinifer (Asia giant forest scorpion)).